Reading from the N-terminus, the 267-residue chain is 4-hydroxy-tetrahydrodipicolinate reductase (267 aa).

Residues 12-17 (GPRGRM), 100-102 (GTT), and 126-129 (APNF) each bind NAD(+). Residue histidine 156 is the Proton donor/acceptor of the active site. A (S)-2,3,4,5-tetrahydrodipicolinate-binding site is contributed by histidine 157. Residue lysine 160 is the Proton donor of the active site. 166-167 (GT) contacts (S)-2,3,4,5-tetrahydrodipicolinate.

This sequence belongs to the DapB family.

The protein localises to the cytoplasm. The catalysed reaction is (S)-2,3,4,5-tetrahydrodipicolinate + NAD(+) + H2O = (2S,4S)-4-hydroxy-2,3,4,5-tetrahydrodipicolinate + NADH + H(+). It catalyses the reaction (S)-2,3,4,5-tetrahydrodipicolinate + NADP(+) + H2O = (2S,4S)-4-hydroxy-2,3,4,5-tetrahydrodipicolinate + NADPH + H(+). The protein operates within amino-acid biosynthesis; L-lysine biosynthesis via DAP pathway; (S)-tetrahydrodipicolinate from L-aspartate: step 4/4. Its function is as follows. Catalyzes the conversion of 4-hydroxy-tetrahydrodipicolinate (HTPA) to tetrahydrodipicolinate. This chain is 4-hydroxy-tetrahydrodipicolinate reductase, found in Bacillus subtilis (strain 168).